The chain runs to 240 residues: Small ribosomal subunit protein uS2 (240 aa).

It belongs to the universal ribosomal protein uS2 family.

The sequence is that of Small ribosomal subunit protein uS2 from Wigglesworthia glossinidia brevipalpis.